The primary structure comprises 388 residues: Alanine racemase (388 aa).

Lysine 40 functions as the Proton acceptor; specific for D-alanine in the catalytic mechanism. Lysine 40 carries the post-translational modification N6-(pyridoxal phosphate)lysine. Arginine 137 contacts substrate. The active-site Proton acceptor; specific for L-alanine is the tyrosine 269. Methionine 318 lines the substrate pocket.

It belongs to the alanine racemase family. Pyridoxal 5'-phosphate is required as a cofactor.

The catalysed reaction is L-alanine = D-alanine. It participates in amino-acid biosynthesis; D-alanine biosynthesis; D-alanine from L-alanine: step 1/1. In terms of biological role, catalyzes the interconversion of L-alanine and D-alanine. May also act on other amino acids. In Halalkalibacterium halodurans (strain ATCC BAA-125 / DSM 18197 / FERM 7344 / JCM 9153 / C-125) (Bacillus halodurans), this protein is Alanine racemase (alr).